A 244-amino-acid polypeptide reads, in one-letter code: Phosphoadenosine 5'-phosphosulfate reductase (244 aa).

Catalysis depends on Cys239, which acts as the Nucleophile; cysteine thiosulfonate intermediate.

The protein belongs to the PAPS reductase family. CysH subfamily.

The protein localises to the cytoplasm. It carries out the reaction [thioredoxin]-disulfide + sulfite + adenosine 3',5'-bisphosphate + 2 H(+) = [thioredoxin]-dithiol + 3'-phosphoadenylyl sulfate. It participates in sulfur metabolism; hydrogen sulfide biosynthesis; sulfite from sulfate: step 3/3. Its function is as follows. Catalyzes the formation of sulfite from phosphoadenosine 5'-phosphosulfate (PAPS) using thioredoxin as an electron donor. The sequence is that of Phosphoadenosine 5'-phosphosulfate reductase from Escherichia coli O157:H7.